Here is a 222-residue protein sequence, read N- to C-terminus: DNA mismatch repair protein MutH (222 aa).

Belongs to the MutH family.

Its subcellular location is the cytoplasm. Sequence-specific endonuclease that cleaves unmethylated GATC sequences. It is involved in DNA mismatch repair. This chain is DNA mismatch repair protein MutH, found in Pasteurella multocida (strain Pm70).